The sequence spans 561 residues: Tetracenomycin A2 monooxygenase-dioxygenase (561 aa).

FAD contacts are provided by L15, E35, Q128, and M152. The Proton acceptor role is filled by Y231. FAD is bound at residue D322.

This sequence belongs to the PheA/TfdB FAD monooxygenase family. Monomer. May form oligomers up to homohexamers. The cofactor is FAD.

The enzyme catalyses tetracenomycin A2 + 2 NADPH + 2 O2 + 2 H(+) = tetracenomycin C + 2 NADP(+) + H2O. It functions in the pathway antibiotic biosynthesis; tetracenomycin C biosynthesis. In terms of biological role, involved in the biosynthesis of tetracenomycin C (TCM C). Catalyzes the triple hydroxylation of tetracenomycin A2 (TCM A2) at positions C-4, C-4a and C-12a to give tetracenomycin C (TCM C). Can use either NADH or NADPH as electron donors, but prefers NADPH under physiological conditions. The protein is Tetracenomycin A2 monooxygenase-dioxygenase of Streptomyces glaucescens.